A 466-amino-acid polypeptide reads, in one-letter code: UDP-N-acetylmuramoylalanine--D-glutamate ligase (466 aa).

ATP is bound at residue Gly-122–Thr-128.

This sequence belongs to the MurCDEF family.

The protein resides in the cytoplasm. It carries out the reaction UDP-N-acetyl-alpha-D-muramoyl-L-alanine + D-glutamate + ATP = UDP-N-acetyl-alpha-D-muramoyl-L-alanyl-D-glutamate + ADP + phosphate + H(+). It participates in cell wall biogenesis; peptidoglycan biosynthesis. Its function is as follows. Cell wall formation. Catalyzes the addition of glutamate to the nucleotide precursor UDP-N-acetylmuramoyl-L-alanine (UMA). The sequence is that of UDP-N-acetylmuramoylalanine--D-glutamate ligase from Aromatoleum aromaticum (strain DSM 19018 / LMG 30748 / EbN1) (Azoarcus sp. (strain EbN1)).